A 184-amino-acid polypeptide reads, in one-letter code: ATP synthase subunit b, chloroplastic (184 aa).

A helical transmembrane segment spans residues 29–49 (TNLINLGVVLGLLVYFGKGVL).

Belongs to the ATPase B chain family. In terms of assembly, F-type ATPases have 2 components, F(1) - the catalytic core - and F(0) - the membrane proton channel. F(1) has five subunits: alpha(3), beta(3), gamma(1), delta(1), epsilon(1). F(0) has four main subunits: a(1), b(1), b'(1) and c(10-14). The alpha and beta chains form an alternating ring which encloses part of the gamma chain. F(1) is attached to F(0) by a central stalk formed by the gamma and epsilon chains, while a peripheral stalk is formed by the delta, b and b' chains.

Its subcellular location is the plastid. The protein resides in the chloroplast thylakoid membrane. F(1)F(0) ATP synthase produces ATP from ADP in the presence of a proton or sodium gradient. F-type ATPases consist of two structural domains, F(1) containing the extramembraneous catalytic core and F(0) containing the membrane proton channel, linked together by a central stalk and a peripheral stalk. During catalysis, ATP synthesis in the catalytic domain of F(1) is coupled via a rotary mechanism of the central stalk subunits to proton translocation. Its function is as follows. Component of the F(0) channel, it forms part of the peripheral stalk, linking F(1) to F(0). The polypeptide is ATP synthase subunit b, chloroplastic (Anthoceros angustus (Hornwort)).